The chain runs to 445 residues: Phosphoglucosamine mutase (445 aa).

Residue Ser-102 is the Phosphoserine intermediate of the active site. Mg(2+) is bound by residues Ser-102, Asp-241, Asp-243, and Asp-245. A Phosphoserine modification is found at Ser-102.

Belongs to the phosphohexose mutase family. Requires Mg(2+) as cofactor. Post-translationally, activated by phosphorylation.

The enzyme catalyses alpha-D-glucosamine 1-phosphate = D-glucosamine 6-phosphate. Functionally, catalyzes the conversion of glucosamine-6-phosphate to glucosamine-1-phosphate. The protein is Phosphoglucosamine mutase of Shewanella sp. (strain W3-18-1).